The following is an 878-amino-acid chain: AP-2 complex subunit alpha (878 aa).

It belongs to the adaptor complexes large subunit family. Adaptor protein complex 2 (AP-2) is a heterotetramer composed of two large adaptins (alpha-type subunit apl3 and beta-type subunit apl1), a medium chain (mu-type subunit apm4) and a small adaptin (sigma-type subunit aps2).

The protein resides in the cell membrane. Its subcellular location is the membrane. It localises to the coated pit. Its function is as follows. Adaptins are components of the adaptor complexes which link clathrin to receptors in coated vesicles. Clathrin-associated protein complexes are believed to interact with the cytoplasmic tails of membrane proteins, leading to their selection and concentration. Alpha adaptin is a subunit of the plasma membrane adaptor. This Schizosaccharomyces pombe (strain 972 / ATCC 24843) (Fission yeast) protein is AP-2 complex subunit alpha (apl3).